Here is a 1070-residue protein sequence, read N- to C-terminus: DNA-directed RNA polymerase subunit beta (1070 aa).

It belongs to the RNA polymerase beta chain family. In terms of assembly, in plastids the minimal PEP RNA polymerase catalytic core is composed of four subunits: alpha, beta, beta', and beta''. When a (nuclear-encoded) sigma factor is associated with the core the holoenzyme is formed, which can initiate transcription.

It localises to the plastid. It carries out the reaction RNA(n) + a ribonucleoside 5'-triphosphate = RNA(n+1) + diphosphate. Functionally, DNA-dependent RNA polymerase catalyzes the transcription of DNA into RNA using the four ribonucleoside triphosphates as substrates. The polypeptide is DNA-directed RNA polymerase subunit beta (Cuscuta exaltata (Tall dodder)).